A 206-amino-acid chain; its full sequence is Peptidyl-tRNA hydrolase (206 aa).

Residue Tyr19 participates in tRNA binding. Catalysis depends on His24, which acts as the Proton acceptor. Positions 70, 72, and 118 each coordinate tRNA.

It belongs to the PTH family. In terms of assembly, monomer.

It localises to the cytoplasm. The enzyme catalyses an N-acyl-L-alpha-aminoacyl-tRNA + H2O = an N-acyl-L-amino acid + a tRNA + H(+). Hydrolyzes ribosome-free peptidyl-tRNAs (with 1 or more amino acids incorporated), which drop off the ribosome during protein synthesis, or as a result of ribosome stalling. In terms of biological role, catalyzes the release of premature peptidyl moieties from peptidyl-tRNA molecules trapped in stalled 50S ribosomal subunits, and thus maintains levels of free tRNAs and 50S ribosomes. The chain is Peptidyl-tRNA hydrolase from Prochlorococcus marinus (strain MIT 9313).